The chain runs to 338 residues: Inositol 2-dehydrogenase 3 (338 aa).

It belongs to the Gfo/Idh/MocA family. As to quaternary structure, homotetramer.

It carries out the reaction myo-inositol + NAD(+) = scyllo-inosose + NADH + H(+). Its function is as follows. Involved in the oxidation of myo-inositol (MI) to 2-keto-myo-inositol (2KMI or 2-inosose). This chain is Inositol 2-dehydrogenase 3, found in Saccharopolyspora erythraea (strain ATCC 11635 / DSM 40517 / JCM 4748 / NBRC 13426 / NCIMB 8594 / NRRL 2338).